The following is a 146-amino-acid chain: VHLTGEEKSAVAALWGKVNVDEVGGEALGRLLVVYPWTQRFFESFGALSTPDAVMGNPKVKAHGKKVLGAFSDGLAHLDNLKGTFAQLSELHCDKLHVDPENFRLLGNVLVCVLARNFGKEFTPQVQAAFQKVVAGVATALAHKYH.

The Globin domain occupies 2 to 146; the sequence is HLTGEEKSAV…VATALAHKYH (145 aa). Residues His-63 and His-92 each coordinate heme b.

The protein belongs to the globin family. As to quaternary structure, heterotetramer of two delta chains and two alpha chains. In terms of tissue distribution, red blood cells.

The protein is Hemoglobin subunit delta (HBD) of Ateles fusciceps (Brown-headed spider monkey).